Here is an 87-residue protein sequence, read N- to C-terminus: Ribonuclease P protein component 1 (87 aa).

The protein belongs to the eukaryotic/archaeal RNase P protein component 1 family. Consists of a catalytic RNA component and at least 4-5 protein subunits.

It localises to the cytoplasm. The catalysed reaction is Endonucleolytic cleavage of RNA, removing 5'-extranucleotides from tRNA precursor.. Part of ribonuclease P, a protein complex that generates mature tRNA molecules by cleaving their 5'-ends. This is Ribonuclease P protein component 1 from Thermoplasma acidophilum (strain ATCC 25905 / DSM 1728 / JCM 9062 / NBRC 15155 / AMRC-C165).